A 181-amino-acid polypeptide reads, in one-letter code: Protein FAM237A (181 aa).

The N-terminal stretch at 1–33 (MADPGNRGGIHRPLSFTCSLLIVGMCCVSPFFC) is a signal peptide. Leucine amide is present on L113. Residues 114-181 (GRRQLVGEEE…GKVNLEIKRK (68 aa)) constitute a propeptide, removed in the mature form.

In terms of processing, the active form requires C-terminal amidation and disulfide bond formation. In terms of tissue distribution, expressed in the pituitary, testis, and heart and at lower levels in the brain.

It localises to the secreted. Its function is as follows. May be capable of activating GPR83 via the GNAQ signaling pathway. The protein is Protein FAM237A of Homo sapiens (Human).